The chain runs to 632 residues: Mediator of RNA polymerase II transcription subunit 17 (632 aa).

Disordered regions lie at residues 1–21 (MSDSFTVSLRPIREKRDRPDS) and 50–72 (EDKHKDHWEEDDEGDKESTDLET). Residues 11 to 21 (PIREKRDRPDS) are compositionally biased toward basic and acidic residues. The span at 58-72 (EEDDEGDKESTDLET) shows a compositional bias: acidic residues.

Belongs to the Mediator complex subunit 17 family. As to quaternary structure, component of the Mediator complex.

It localises to the nucleus. In terms of biological role, component of the Mediator complex, a coactivator involved in the regulated transcription of nearly all RNA polymerase II-dependent genes. Mediator functions as a bridge to convey information from gene-specific regulatory proteins to the basal RNA polymerase II transcription machinery. Mediator is recruited to promoters by direct interactions with regulatory proteins and serves as a scaffold for the assembly of a functional preinitiation complex with RNA polymerase II and the general transcription factors. This Emericella nidulans (strain FGSC A4 / ATCC 38163 / CBS 112.46 / NRRL 194 / M139) (Aspergillus nidulans) protein is Mediator of RNA polymerase II transcription subunit 17 (srb4).